The primary structure comprises 62 residues: Guanine nucleotide-binding protein subunit gamma (62 aa).

The disordered stretch occupies residues D40–L62. The segment covering F53–L62 has biased composition (basic and acidic residues). The residue at position 59 (C59) is a Cysteine methyl ester. A lipid anchor (S-geranylgeranyl cysteine) is attached at C59. Residues S60–L62 constitute a propeptide, removed in mature form.

The protein belongs to the G protein gamma family. G proteins are composed of 3 units, alpha, beta and gamma. Interacts with gpb-1 and gpb-2. As to expression, predominantly expressed in the central nervous system.

It is found in the cell membrane. Its function is as follows. Guanine nucleotide-binding proteins (G proteins) are involved as a modulator or transducer in various transmembrane signaling systems. The beta and gamma chains are required for the GTPase activity, for replacement of GDP by GTP, and for G protein-effector interaction. The protein is Guanine nucleotide-binding protein subunit gamma (gpc-1) of Caenorhabditis elegans.